Here is an 823-residue protein sequence, read N- to C-terminus: Bifunctional enzyme flvA (823 aa).

The interval Thr56 to Ile535 is pyridoxal 5'-phosphate-dependent lyase. Lys331 is modified (N6-(pyridoxal phosphate)lysine). The interval Asp573 to Leu823 is alpha-ketoglutarate-dependent oxygenase. Fe cation contacts are provided by His703 and Asp705.

In the N-terminal section; belongs to the trans-sulfuration enzymes family. The protein in the C-terminal section; belongs to the iron/ascorbate-dependent oxidoreductase family. Requires pyridoxal 5'-phosphate as cofactor. Fe(2+) is required as a cofactor.

It catalyses the reaction O-acetyl-L-homoserine + 3-methyl-2-oxobutanoate = (6S)-6-amino-3,3-dimethyl-2-oxoheptanedioate + acetate + H(+). The catalysed reaction is (6S)-3,3-dimethylpiperidine-2,6-dicarboxylate + 2-oxoglutarate + AH2 + O2 + H(+) = (2S)-5,5-dimethylpiperidine-2-carboxylate + succinate + A + 2 CO2 + H2O. The protein operates within secondary metabolite biosynthesis; terpenoid biosynthesis. Bifunctional enzyme; part of the gene cluster that mediates the biosynthesis of flavunoidine, an alkaloidal terpenoid with a tetracyclic cage-like core connected to dimethylcadaverine via a C-N bond and acylated with 5,5-dimethyl-L-pipecolate. The tetracyclic core is synthesized by the terpene cyclase flvE and the cytochrome P450 monooxygenase flvD. The terpene cyclase flvE catalyzes the cyclization of farnesyl pyrophosphate (FPP) to form (1R,4R,5S)-(+)-acoradiene and the cytochrome P450 monooxygenase flvD is then responsible for oxidative conversion of (1R,4R,5S)-(+)-acoradiene into the tetracyclic cage present in the final product flavunoidine. In parallel, the N-methyltransferase flvH dimethylates L-lysine to give N,N-dimethyl-L-Lysin which is decarboxylated by flvG to afford dimethylcadaverine. The terpene cyclase-like protein flvF is the enzyme that attaches the dimethylcadaverine precusor at the C-7 of the tetracyclic cage to yield pre-flavunoidine. The cytochrome monooxygenase flvC hydroxylates the C-10 position of pre-flavunoidine whereas the NRPS flvI acylates the terpenoid core at the hydroxylated C-10 with dimethylpipecolate to yield final flavunoidine. The bifunctional enzyme flvA and the dehydrogenase flvB are responsible for the synthesis of the dimethylpipecolate precursor. The PLP-dependent lyase domain of flvA might use L-O-acetyl-homoserine and alpha-keto-isovalerate to form an intermediary ketone that can cyclize intramolecularly to yield an imine. The imine can be reduced by flvB to yield the 6-carboxylated pipecolate. The C-terminal alpha-KG-dependent oxygenase domain of flvA is then proposed to catalyze the decarboxylation to yield dimethylpipecolate. The polypeptide is Bifunctional enzyme flvA (Aspergillus flavus (strain ATCC 200026 / FGSC A1120 / IAM 13836 / NRRL 3357 / JCM 12722 / SRRC 167)).